The sequence spans 206 residues: Ribonuclease HII (206 aa).

The RNase H type-2 domain occupies 22-206; it reads RFICGVDEAG…ISFLKNILSL (185 aa). Residues Asp-28, Glu-29, and Asp-120 each coordinate a divalent metal cation.

This sequence belongs to the RNase HII family. It depends on Mn(2+) as a cofactor. The cofactor is Mg(2+).

The protein localises to the cytoplasm. It carries out the reaction Endonucleolytic cleavage to 5'-phosphomonoester.. Endonuclease that specifically degrades the RNA of RNA-DNA hybrids. The protein is Ribonuclease HII of Caldicellulosiruptor bescii (strain ATCC BAA-1888 / DSM 6725 / KCTC 15123 / Z-1320) (Anaerocellum thermophilum).